Consider the following 709-residue polypeptide: Phosphoribosylformylglycinamidine synthase subunit PurL (709 aa).

Residue histidine 36 is part of the active site. Tyrosine 39 and lysine 80 together coordinate ATP. Residue glutamate 82 coordinates Mg(2+). Substrate is bound by residues 83-86 (SHNH) and arginine 105. Residue histidine 84 is the Proton acceptor of the active site. Aspartate 106 lines the Mg(2+) pocket. Residue glutamine 226 participates in substrate binding. Residue aspartate 252 coordinates Mg(2+). 294–296 (ETQ) is a substrate binding site. ATP is bound by residues aspartate 470 and glycine 507. Serine 510 serves as a coordination point for substrate.

This sequence belongs to the FGAMS family. Monomer. Part of the FGAM synthase complex composed of 1 PurL, 1 PurQ and 2 PurS subunits.

The protein localises to the cytoplasm. It catalyses the reaction N(2)-formyl-N(1)-(5-phospho-beta-D-ribosyl)glycinamide + L-glutamine + ATP + H2O = 2-formamido-N(1)-(5-O-phospho-beta-D-ribosyl)acetamidine + L-glutamate + ADP + phosphate + H(+). Its pathway is purine metabolism; IMP biosynthesis via de novo pathway; 5-amino-1-(5-phospho-D-ribosyl)imidazole from N(2)-formyl-N(1)-(5-phospho-D-ribosyl)glycinamide: step 1/2. Part of the phosphoribosylformylglycinamidine synthase complex involved in the purines biosynthetic pathway. Catalyzes the ATP-dependent conversion of formylglycinamide ribonucleotide (FGAR) and glutamine to yield formylglycinamidine ribonucleotide (FGAM) and glutamate. The FGAM synthase complex is composed of three subunits. PurQ produces an ammonia molecule by converting glutamine to glutamate. PurL transfers the ammonia molecule to FGAR to form FGAM in an ATP-dependent manner. PurS interacts with PurQ and PurL and is thought to assist in the transfer of the ammonia molecule from PurQ to PurL. The polypeptide is Phosphoribosylformylglycinamidine synthase subunit PurL (Saccharolobus islandicus (strain M.16.27) (Sulfolobus islandicus)).